The following is a 187-amino-acid chain: Threonylcarbamoyl-AMP synthase (187 aa).

One can recognise a YrdC-like domain in the interval 4 to 187 (TLTLSEAVTA…DARSGHILRL (184 aa)).

Belongs to the SUA5 family. TsaC subfamily.

The protein localises to the cytoplasm. It carries out the reaction L-threonine + hydrogencarbonate + ATP = L-threonylcarbamoyladenylate + diphosphate + H2O. In terms of biological role, required for the formation of a threonylcarbamoyl group on adenosine at position 37 (t(6)A37) in tRNAs that read codons beginning with adenine. Catalyzes the conversion of L-threonine, HCO(3)(-)/CO(2) and ATP to give threonylcarbamoyl-AMP (TC-AMP) as the acyladenylate intermediate, with the release of diphosphate. This chain is Threonylcarbamoyl-AMP synthase, found in Xylella fastidiosa (strain 9a5c).